The primary structure comprises 349 residues: Mannonate dehydratase (349 aa).

Belongs to the mannonate dehydratase family. Requires Fe(2+) as cofactor. It depends on Mn(2+) as a cofactor.

It carries out the reaction D-mannonate = 2-dehydro-3-deoxy-D-gluconate + H2O. Its pathway is carbohydrate metabolism; pentose and glucuronate interconversion. Functionally, catalyzes the dehydration of D-mannonate. The polypeptide is Mannonate dehydratase (Oceanobacillus iheyensis (strain DSM 14371 / CIP 107618 / JCM 11309 / KCTC 3954 / HTE831)).